A 137-amino-acid polypeptide reads, in one-letter code: ATP synthase epsilon chain (137 aa).

Belongs to the ATPase epsilon chain family. F-type ATPases have 2 components, CF(1) - the catalytic core - and CF(0) - the membrane proton channel. CF(1) has five subunits: alpha(3), beta(3), gamma(1), delta(1), epsilon(1). CF(0) has three main subunits: a, b and c.

The protein resides in the cell inner membrane. Its function is as follows. Produces ATP from ADP in the presence of a proton gradient across the membrane. The chain is ATP synthase epsilon chain from Yersinia pestis bv. Antiqua (strain Antiqua).